A 43-amino-acid polypeptide reads, in one-letter code: uncharacterized protein (43 aa).

This is an uncharacterized protein from Sinorhizobium fredii (strain NBRC 101917 / NGR234).